Here is a 135-residue protein sequence, read N- to C-terminus: Protein Wnt-7c (135 aa).

2 disulfide bridges follow: C3/C17 and C5/C12. The O-palmitoleoyl serine; by PORCN moiety is linked to residue S9. 3 N-linked (GlcNAc...) asparagine glycosylation sites follow: N62, N85, and N98. Intrachain disulfides connect C81/C112, C97/C107, and C134/C135.

The protein belongs to the Wnt family. Post-translationally, palmitoleoylation is required for efficient binding to frizzled receptors. Depalmitoleoylation leads to Wnt signaling pathway inhibition.

It localises to the secreted. The protein localises to the extracellular space. It is found in the extracellular matrix. Functionally, ligand for members of the frizzled family of seven transmembrane receptors. Probable developmental protein. May be a signaling molecule which affects the development of discrete regions of tissues. Is likely to signal over only few cell diameters. This chain is Protein Wnt-7c (wnt7c), found in Xenopus laevis (African clawed frog).